The sequence spans 123 residues: Large ribosomal subunit protein uL24 (123 aa).

A disordered region spans residues 100-123; the sequence is RRPDGSTYKAERSVRISRKTGKEI.

The protein belongs to the universal ribosomal protein uL24 family. In terms of assembly, part of the 50S ribosomal subunit.

Its function is as follows. One of two assembly initiator proteins, it binds directly to the 5'-end of the 23S rRNA, where it nucleates assembly of the 50S subunit. Functionally, one of the proteins that surrounds the polypeptide exit tunnel on the outside of the subunit. The sequence is that of Large ribosomal subunit protein uL24 from Nocardioides sp. (strain ATCC BAA-499 / JS614).